A 427-amino-acid polypeptide reads, in one-letter code: Gamma-glutamyl phosphate reductase (427 aa).

Belongs to the gamma-glutamyl phosphate reductase family.

The protein localises to the cytoplasm. The enzyme catalyses L-glutamate 5-semialdehyde + phosphate + NADP(+) = L-glutamyl 5-phosphate + NADPH + H(+). It functions in the pathway amino-acid biosynthesis; L-proline biosynthesis; L-glutamate 5-semialdehyde from L-glutamate: step 2/2. Functionally, catalyzes the NADPH-dependent reduction of L-glutamate 5-phosphate into L-glutamate 5-semialdehyde and phosphate. The product spontaneously undergoes cyclization to form 1-pyrroline-5-carboxylate. This chain is Gamma-glutamyl phosphate reductase, found in Bifidobacterium adolescentis (strain ATCC 15703 / DSM 20083 / NCTC 11814 / E194a).